The following is a 217-amino-acid chain: GTP cyclohydrolase 1 (217 aa).

C109, H112, and C180 together coordinate Zn(2+).

The protein belongs to the GTP cyclohydrolase I family. In terms of assembly, toroid-shaped homodecamer, composed of two pentamers of five dimers.

It catalyses the reaction GTP + H2O = 7,8-dihydroneopterin 3'-triphosphate + formate + H(+). The protein operates within cofactor biosynthesis; 7,8-dihydroneopterin triphosphate biosynthesis; 7,8-dihydroneopterin triphosphate from GTP: step 1/1. This chain is GTP cyclohydrolase 1, found in Vibrio vulnificus (strain CMCP6).